The chain runs to 977 residues: Disks large-associated protein 3 (977 aa).

A compositionally biased stretch (basic and acidic residues) spans Met-1–Ser-10. 6 disordered regions span residues Met-1–Asp-24, Ala-52–Gly-96, Phe-137–Ser-167, Ala-181–Ala-289, Ala-398–Ala-417, and Pro-529–Gly-582. Low complexity predominate over residues Gly-53–Gly-73. Ser-58 bears the Phosphoserine mark. The segment covering Pro-74 to Ser-87 has biased composition (gly residues). Residues Pro-189–Gly-201 are compositionally biased toward basic and acidic residues. The span at Ser-221 to Asp-245 shows a compositional bias: basic residues. Over residues Gly-258–Gly-271 the composition is skewed to low complexity. Phosphoserine is present on residues Ser-404, Ser-407, Ser-410, and Ser-414. A compositionally biased stretch (pro residues) spans Ala-538–Gln-547. Ser-641 and Ser-643 each carry phosphoserine. Disordered stretches follow at residues Glu-739 to Pro-788 and Glu-906 to Gln-939. 2 stretches are compositionally biased toward basic and acidic residues: residues Gly-767–Ser-777 and Pro-925–Gln-939. Ser-930, Ser-933, and Ser-965 each carry phosphoserine.

This sequence belongs to the SAPAP family. As to quaternary structure, interacts with DLG4/PSD-95. As to expression, highly expressed in central and peripherical nervous system (at protein level).

It is found in the cell membrane. Its subcellular location is the postsynaptic density. The protein localises to the synapse. In terms of biological role, may play a role in the molecular organization of synapses and neuronal cell signaling. Could be an adapter protein linking ion channel to the subsynaptic cytoskeleton. May induce enrichment of PSD-95/SAP90 at the plasma membrane. The sequence is that of Disks large-associated protein 3 (Dlgap3) from Mus musculus (Mouse).